The primary structure comprises 87 residues: UPF0367 protein SynWH7803_2240 (87 aa).

The protein belongs to the UPF0367 family.

The polypeptide is UPF0367 protein SynWH7803_2240 (Synechococcus sp. (strain WH7803)).